The sequence spans 79 residues: Defensin-like protein 54 (79 aa).

The signal sequence occupies residues 1–27; that stretch reads MGIKKTSATVFLVIILTISFSYYDVEA. Cystine bridges form between C39/C76, C43/C67, C52/C74, and C56/C75.

Belongs to the DEFL family.

The protein resides in the secreted. The protein is Defensin-like protein 54 of Arabidopsis thaliana (Mouse-ear cress).